The primary structure comprises 155 residues: Large-conductance mechanosensitive channel (155 aa).

2 helical membrane-spanning segments follow: residues Val25 to Leu45 and Gly98 to Val118.

Belongs to the MscL family. In terms of assembly, homopentamer.

Its subcellular location is the cell inner membrane. In terms of biological role, channel that opens in response to stretch forces in the membrane lipid bilayer. May participate in the regulation of osmotic pressure changes within the cell. The protein is Large-conductance mechanosensitive channel of Novosphingobium aromaticivorans (strain ATCC 700278 / DSM 12444 / CCUG 56034 / CIP 105152 / NBRC 16084 / F199).